The sequence spans 79 residues: Virulence protein MsgA (79 aa).

It belongs to the DinI family.

Its function is as follows. Affects survival in macrophages. In Salmonella typhi, this protein is Virulence protein MsgA (msgA).